The chain runs to 484 residues: Mitochondrial metal transporter 2 (484 aa).

The N-terminal 56 residues, 1–56 (MLRISIDSIKQFGSFVPGYNNTSYHAAGRAIRTSSLYSTMISANPRRCLHSSKLLN), are a transit peptide targeting the mitochondrion. The segment covering 73-82 (SSQNGSNSRQ) has biased composition (polar residues). The segment at 73 to 114 (SSQNGSNSRQNESEGKKEGKASSVKSLLQHTHSHSHTHMHDN) is disordered. Residues 83-92 (NESEGKKEGK) are compositionally biased toward basic and acidic residues. 5 helical membrane passes run 132–152 (ITWI…VGGI), 158–178 (ALLA…LTLF), 209–229 (ILAM…VGPV), 256–276 (ATNV…EWVF), and 316–336 (YFFN…GLII). Positions 453 to 484 (DSKGDLEHSHDTKSTNHTHTHSDSADTHTHKH) are disordered.

This sequence belongs to the cation diffusion facilitator (CDF) transporter (TC 2.A.4) family. SLC30A subfamily.

The protein localises to the mitochondrion membrane. Its function is as follows. Mitochondrial metal transporter involved in mitochondrial iron accumulation. This is Mitochondrial metal transporter 2 (MMT2) from Saccharomyces cerevisiae (strain ATCC 204508 / S288c) (Baker's yeast).